The sequence spans 142 residues: Cystatin-8 (142 aa).

Residues 1 to 19 (MAKPLWLSLILFIIPVALA) form the signal peptide. N39 carries an N-linked (GlcNAc...) asparagine glycan. Positions 77-81 (QITDR) match the Secondary area of contact motif. Intrachain disulfides connect C95–C105 and C119–C139. N-linked (GlcNAc...) asparagine glycosylation occurs at N100.

The protein belongs to the cystatin family. Proximal caput region of the epididymis. Lower expression in the testis. Within the testis it is localized to the elongating spermatids, whereas within the epididymis it is exclusively synthesized by the proximal caput epithelium.

It is found in the secreted. Its function is as follows. Performs a specialized role during sperm development and maturation. This Mus musculus (Mouse) protein is Cystatin-8 (Cst8).